A 257-amino-acid chain; its full sequence is Imidazole glycerol phosphate synthase subunit HisF (257 aa).

Catalysis depends on residues Asp-11 and Asp-130.

This sequence belongs to the HisA/HisF family. Heterodimer of HisH and HisF.

It is found in the cytoplasm. The catalysed reaction is 5-[(5-phospho-1-deoxy-D-ribulos-1-ylimino)methylamino]-1-(5-phospho-beta-D-ribosyl)imidazole-4-carboxamide + L-glutamine = D-erythro-1-(imidazol-4-yl)glycerol 3-phosphate + 5-amino-1-(5-phospho-beta-D-ribosyl)imidazole-4-carboxamide + L-glutamate + H(+). Its pathway is amino-acid biosynthesis; L-histidine biosynthesis; L-histidine from 5-phospho-alpha-D-ribose 1-diphosphate: step 5/9. Functionally, IGPS catalyzes the conversion of PRFAR and glutamine to IGP, AICAR and glutamate. The HisF subunit catalyzes the cyclization activity that produces IGP and AICAR from PRFAR using the ammonia provided by the HisH subunit. The sequence is that of Imidazole glycerol phosphate synthase subunit HisF from Shewanella sp. (strain W3-18-1).